The sequence spans 126 residues: Large ribosomal subunit protein bL17 (126 aa).

This sequence belongs to the bacterial ribosomal protein bL17 family. As to quaternary structure, part of the 50S ribosomal subunit. Contacts protein L32.

This Rickettsia felis (strain ATCC VR-1525 / URRWXCal2) (Rickettsia azadi) protein is Large ribosomal subunit protein bL17.